A 445-amino-acid polypeptide reads, in one-letter code: Exodeoxyribonuclease 7 large subunit (445 aa).

It belongs to the XseA family. Heterooligomer composed of large and small subunits.

The protein localises to the cytoplasm. The enzyme catalyses Exonucleolytic cleavage in either 5'- to 3'- or 3'- to 5'-direction to yield nucleoside 5'-phosphates.. In terms of biological role, bidirectionally degrades single-stranded DNA into large acid-insoluble oligonucleotides, which are then degraded further into small acid-soluble oligonucleotides. The chain is Exodeoxyribonuclease 7 large subunit from Nautilia profundicola (strain ATCC BAA-1463 / DSM 18972 / AmH).